Here is a 425-residue protein sequence, read N- to C-terminus: Dihydroorotase (425 aa).

Residues His56 and His58 each contribute to the Zn(2+) site. Substrate contacts are provided by residues His58–Arg60 and Asn90. Residues Asp148, His175, and His228 each coordinate Zn(2+). Asn274 provides a ligand contact to substrate. Asp301 is a binding site for Zn(2+). Asp301 is an active-site residue. Substrate-binding positions include His305 and Phe319–Gly320.

This sequence belongs to the metallo-dependent hydrolases superfamily. DHOase family. Class I DHOase subfamily. The cofactor is Zn(2+).

It carries out the reaction (S)-dihydroorotate + H2O = N-carbamoyl-L-aspartate + H(+). The protein operates within pyrimidine metabolism; UMP biosynthesis via de novo pathway; (S)-dihydroorotate from bicarbonate: step 3/3. In terms of biological role, catalyzes the reversible cyclization of carbamoyl aspartate to dihydroorotate. The chain is Dihydroorotase from Lactobacillus delbrueckii subsp. bulgaricus (strain ATCC BAA-365 / Lb-18).